Here is a 37-residue protein sequence, read N- to C-terminus: L-amino-acid oxidase (37 aa).

The protein belongs to the flavin monoamine oxidase family. FIG1 subfamily. In terms of assembly, homodimer; non-covalently linked. Requires FAD as cofactor. N-Glycosylated. In terms of tissue distribution, expressed by the venom gland.

The protein localises to the secreted. The enzyme catalyses an L-alpha-amino acid + O2 + H2O = a 2-oxocarboxylate + H2O2 + NH4(+). It catalyses the reaction L-leucine + O2 + H2O = 4-methyl-2-oxopentanoate + H2O2 + NH4(+). The catalysed reaction is L-phenylalanine + O2 + H2O = 3-phenylpyruvate + H2O2 + NH4(+). It carries out the reaction L-tryptophan + O2 + H2O = indole-3-pyruvate + H2O2 + NH4(+). The enzyme catalyses L-methionine + O2 + H2O = 4-methylsulfanyl-2-oxobutanoate + H2O2 + NH4(+). It catalyses the reaction L-isoleucine + O2 + H2O = (S)-3-methyl-2-oxopentanoate + H2O2 + NH4(+). The catalysed reaction is L-arginine + O2 + H2O = 5-guanidino-2-oxopentanoate + H2O2 + NH4(+). It carries out the reaction L-histidine + O2 + H2O = 3-(imidazol-5-yl)pyruvate + H2O2 + NH4(+). The enzyme catalyses L-valine + O2 + H2O = 3-methyl-2-oxobutanoate + H2O2 + NH4(+). Catalyzes an oxidative deamination of predominantly hydrophobic and aromatic L-amino acids, thus producing hydrogen peroxide that may contribute to the diverse toxic effects of this enzyme. Is highly active on L-Leu, L-Met, moderately active on L-Arg, L-Trp, L-Phe, L-Val, L-His, and L-Ile, and is weakly or not active on L-Cys, L-Lys, L-Ala, L-Thr, L-Asp, L-Ser, and L-Pro. Exhibits diverse biological activities, such as hemorrhage, edema, apoptosis of vascular endothelial cells or tumor cell lines, as well as regulation of platelet aggregation. Effects of snake L-amino oxidases on platelets are controversial, since they either induce aggregation or inhibit agonist-induced aggregation. These different effects are probably due to different experimental conditions. This protein induce hemolysis and has antibacterial and antiparasitic activities (against the Gram-positive S.aureus). Tested in vivo, this protein significantly inhibits Ehrlich ascite tumors growth and induces an influx of polymorphonuclear cells, as well as spontaneous liberation of hydrogen peroxide from peritoneal macrophages. This chain is L-amino-acid oxidase, found in Bothrops jararaca (Jararaca).